The following is an 86-amino-acid chain: Anti-adapter protein IraP (86 aa).

A coiled-coil region spans residues 1–47 (MKNLIAELLLKLAQKEEESKELVAQVEALEIIVTAMLRNMAQSEQQM).

This sequence belongs to the IraP family. Interacts with RssB.

The protein resides in the cytoplasm. Functionally, inhibits RpoS proteolysis by regulating RssB activity, thereby increasing the stability of the sigma stress factor RpoS especially during phosphate and magnesium starvation, but also in stationary phase and during nitrogen starvation. Its effect on RpoS stability is due to its interaction with RssB, which probably blocks the interaction of RssB with RpoS, and the consequent delivery of the RssB-RpoS complex to the ClpXP protein degradation pathway. This Salmonella arizonae (strain ATCC BAA-731 / CDC346-86 / RSK2980) protein is Anti-adapter protein IraP.